Here is a 541-residue protein sequence, read N- to C-terminus: Chaperonin GroEL (541 aa).

Residues Thr-29–Pro-32, Asp-86–Thr-90, Gly-413, Asn-476–Ala-478, and Asp-492 contribute to the ATP site.

This sequence belongs to the chaperonin (HSP60) family. In terms of assembly, forms a cylinder of 14 subunits composed of two heptameric rings stacked back-to-back. Interacts with the co-chaperonin GroES.

The protein resides in the cytoplasm. The catalysed reaction is ATP + H2O + a folded polypeptide = ADP + phosphate + an unfolded polypeptide.. Together with its co-chaperonin GroES, plays an essential role in assisting protein folding. The GroEL-GroES system forms a nano-cage that allows encapsulation of the non-native substrate proteins and provides a physical environment optimized to promote and accelerate protein folding. The polypeptide is Chaperonin GroEL (Streptococcus equi subsp. zooepidemicus (strain MGCS10565)).